The following is a 91-amino-acid chain: MQYKINMYAIVVYDVNVSRQNQIREFLRKYLYHVQRSVFEGEISPSSLYYMKKILQSYIGETDSLIIYVLRDKSCLMDKIVLGEDKDLQIY.

Aspartate 14 contacts Mg(2+).

It belongs to the CRISPR-associated endoribonuclease Cas2 protein family. As to quaternary structure, homodimer, forms a heterotetramer with a Cas1 homodimer. Requires Mg(2+) as cofactor.

In terms of biological role, CRISPR (clustered regularly interspaced short palindromic repeat), is an adaptive immune system that provides protection against mobile genetic elements (viruses, transposable elements and conjugative plasmids). CRISPR clusters contain sequences complementary to antecedent mobile elements and target invading nucleic acids. CRISPR clusters are transcribed and processed into CRISPR RNA (crRNA). Functions as a ssRNA-specific endoribonuclease. Involved in the integration of spacer DNA into the CRISPR cassette. This Nanoarchaeum equitans (strain Kin4-M) protein is CRISPR-associated endoribonuclease Cas2.